Reading from the N-terminus, the 371-residue chain is Anhydro-N-acetylmuramic acid kinase (371 aa).

15–22 (GTSLDGVD) is an ATP binding site.

The protein belongs to the anhydro-N-acetylmuramic acid kinase family.

The enzyme catalyses 1,6-anhydro-N-acetyl-beta-muramate + ATP + H2O = N-acetyl-D-muramate 6-phosphate + ADP + H(+). It participates in amino-sugar metabolism; 1,6-anhydro-N-acetylmuramate degradation. Its pathway is cell wall biogenesis; peptidoglycan recycling. Its function is as follows. Catalyzes the specific phosphorylation of 1,6-anhydro-N-acetylmuramic acid (anhMurNAc) with the simultaneous cleavage of the 1,6-anhydro ring, generating MurNAc-6-P. Is required for the utilization of anhMurNAc either imported from the medium or derived from its own cell wall murein, and thus plays a role in cell wall recycling. The chain is Anhydro-N-acetylmuramic acid kinase from Cereibacter sphaeroides (strain ATCC 17023 / DSM 158 / JCM 6121 / CCUG 31486 / LMG 2827 / NBRC 12203 / NCIMB 8253 / ATH 2.4.1.) (Rhodobacter sphaeroides).